The chain runs to 171 residues: Putative rhomboid protein L523 (171 aa).

4 consecutive transmembrane segments (helical) span residues 3–23, 67–87, 94–114, and 119–139; these read YVTYIVLLILVVIFFSPLNFF, FAFCIIFIWILSSMLLLAEHT, VYTVGFSGVIFGLIVVYLMSL, and GLSIAGLVLSIIPQFFVSGIS. Ser-100 serves as the catalytic Nucleophile. The active site involves His-143. Residues 144–164 traverse the membrane as a helical segment; sequence ICGMIAGFVYVVLFPLPKGSV.

It belongs to the peptidase S54 family.

The protein localises to the membrane. Probable serine protease. The chain is Putative rhomboid protein L523 from Acanthamoeba polyphaga mimivirus (APMV).